A 759-amino-acid polypeptide reads, in one-letter code: MIEERGSSRGSREDRGSSRGSSRGSFEDKGSSHDWKGMGGSTPRPRLTRLVAKKDRNYDAKVDSDFDDDSSVHSTSSPRLSPASSDNLSKITIGQQSFRVGGDVDNLKALYEALGATSPAALGIEASDWESRRKSAVYSRPTSPPRVSHDTGQSSYSHDFQFPASRVDSSLESPPLSPRGLAPMSPVRPIEVEWRKHRNNYAKPTISNRPGRENNPLKPSQPPPTMFPQSSGLRTPDPLPPIDTSTSRLGRESLELQNRHTTLGAYSPPGLRKVHSELTGLVSARSDGAGWASDIESAKRNEDLAVASPVFRDNLPSAAVAMPNGSLVRASFTPRDSNRMNSVRSNSHGLRWNSCHAQEAEAIAKTALEETSNGLRIEDPERIRDLEKPSPLIIEKVDEPLSEVSSSVSTESSPSVIPKRPPWDTWAKGEFLGSGTFGSVYEGVARNGTFFAVKEVNLADEGKLGRQAVKQLEREIALLSDIQHPNIVQYLGTERTEDKLYIFLELLNKGSLANLYRKYGLFYEQIKAYTEQILTGLKYLHDRKIIHRDIKCANILVDTNGVVKLADFGMAKQVEKFGFAKSFVGSAHWMAPEVVDPKQQYNFAADIWSLGCTVLEMATEGPPFGELEFIAVFWKIGRGEAPLIPDDLEDELKDFIAQCLQVDASKRPTCDMLLAHPFITGEEMTGPVTQMGTPGLSTISEERSVDMSVTSSIAVSSNSGTSPRVIENLVNHLSIERRPKSMRTLRSELSMSSAESIAS.

Composition is skewed to basic and acidic residues over residues 1 to 17, 25 to 36, and 52 to 64; these read MIEE…DRGS, SFEDKGSSHDWK, and AKKD…KVDS. 4 disordered regions span residues 1-90, 122-160, 165-184, and 195-239; these read MIEE…NLSK, LGIE…SHDF, SRVD…LAPM, and RKHR…PDPL. The span at 72–85 shows a compositional bias: low complexity; it reads VHSTSSPRLSPASS. Residues 426 to 679 enclose the Protein kinase domain; that stretch reads WAKGEFLGSG…CDMLLAHPFI (254 aa). ATP contacts are provided by residues 432 to 440 and lysine 454; that span reads LGSGTFGSV. The active-site Proton acceptor is the aspartate 549.

It belongs to the protein kinase superfamily. STE Ser/Thr protein kinase family. MAP kinase kinase kinase subfamily.

It localises to the cell membrane. The catalysed reaction is L-seryl-[protein] + ATP = O-phospho-L-seryl-[protein] + ADP + H(+). The enzyme catalyses L-threonyl-[protein] + ATP = O-phospho-L-threonyl-[protein] + ADP + H(+). Functionally, the CERK1, MEKK1a/b, MKK1a/b/c and MPK4a/b proteins are involved in pathogen defense. The pathway induces rapid growth inhibition, cell wall depositions and accumulation of defense-related transcripts. This protein is required for responses to chitin and acts redundantly with MEKK1b. This is Mitogen-activated protein kinase kinase kinase 1a from Physcomitrium patens (Spreading-leaved earth moss).